A 176-amino-acid chain; its full sequence is Flavodoxin 1 (176 aa).

A Flavodoxin-like domain is found at 4-165 (HGIFFGSDTG…RVEKWVKQIS (162 aa)).

It belongs to the flavodoxin family. Requires FMN as cofactor.

Its function is as follows. Low-potential electron donor to a number of redox enzymes. This Shigella flexneri protein is Flavodoxin 1 (fldA).